Consider the following 986-residue polypeptide: Bone morphogenetic protein 1 (986 aa).

The N-terminal stretch at 1-22 (MPGVARLPLLLGLLLLPRPGRP) is a signal peptide. Residues 23–120 (LDLADYTYDL…RWRGRSRSRR (98 aa)) constitute a propeptide that is removed on maturation. The disordered stretch occupies residues 83 to 125 (SIKAAVPGNTSTPSCQSTNGQPQRGACGRWRGRSRSRRAATSR). The span at 90–104 (GNTSTPSCQSTNGQP) shows a compositional bias: polar residues. Asparagine 91 is a glycosylation site (N-linked (GlcNAc...) asparagine). Basic residues predominate over residues 112–122 (WRGRSRSRRAA). The Peptidase M12A domain occupies 121 to 320 (AATSRPERVW…AQARKLYKCP (200 aa)). The N-linked (GlcNAc...) asparagine glycan is linked to asparagine 142. Cystine bridges form between cysteine 163–cysteine 319, cysteine 183–cysteine 205, cysteine 185–cysteine 186, and cysteine 322–cysteine 348. Histidine 213 is a binding site for Zn(2+). Residue glutamate 214 is part of the active site. The Zn(2+) site is built by histidine 217 and histidine 223. 2 consecutive CUB domains span residues 322–434 (CGET…YEAI) and 435–546 (CGGD…NFFK). 2 N-linked (GlcNAc...) asparagine glycosylation sites follow: asparagine 332 and asparagine 363. Intrachain disulfides connect cysteine 375–cysteine 397, cysteine 435–cysteine 461, cysteine 488–cysteine 510, cysteine 551–cysteine 563, cysteine 559–cysteine 572, cysteine 574–cysteine 587, cysteine 591–cysteine 617, cysteine 644–cysteine 666, cysteine 707–cysteine 718, cysteine 714–cysteine 727, cysteine 729–cysteine 742, cysteine 747–cysteine 773, cysteine 800–cysteine 822, cysteine 860–cysteine 890, and cysteine 917–cysteine 939. Residues 547-588 (EVDECSRPNRGGCEQRCLNTLGSYKCSCDPGYELAPDKRRCE) form the EGF-like 1; calcium-binding domain. Residues 591–703 (CGGFLTKLNG…KGFKAHFFSD (113 aa)) form the CUB 3 domain. N-linked (GlcNAc...) asparagine glycosylation is present at asparagine 599. Positions 704-743 (KDECSKDNGGCQQDCVNTFGSYECQCRSGFVLHDNKHDCK) constitute an EGF-like 2; calcium-binding domain. CUB domains lie at 747 to 859 (CDHK…HATE) and 860 to 976 (CGGQ…YTST). Omega-N-methylarginine occurs at positions 934 and 937.

As to quaternary structure, interacts with POSTN, the interaction promotes deposition on the extracellular matrix. The cofactor is Zn(2+). Proteolytically activated in the trans-Golgi network by furin-like/paired basic proprotein convertases, cleavage is not required for secretion. In terms of tissue distribution, ubiquitous.

The protein localises to the golgi apparatus. The protein resides in the trans-Golgi network. Its subcellular location is the secreted. It localises to the extracellular space. It is found in the extracellular matrix. It catalyses the reaction Cleavage of the C-terminal propeptide at Ala-|-Asp in type I and II procollagens and at Arg-|-Asp in type III.. Activity is increased by the procollagen C-endopeptidase enhancer protein. In terms of biological role, metalloprotease that plays key roles in regulating the formation of the extracellular matrix (ECM) via processing of various precursor proteins into mature functional enzymes or structural proteins. Thereby participates in several developmental and physiological processes such as cartilage and bone formation, muscle growth and homeostasis, wound healing and tissue repair. Roles in ECM formation include cleavage of the C-terminal propeptides from procollagens such as procollagen I, II and III or the proteolytic activation of the enzyme lysyl oxidase LOX, necessary to formation of covalent cross-links in collagen and elastic fibers. Additional substrates include matricellular thrombospondin-1/THBS1 whose cleavage leads to cell adhesion disruption and TGF-beta activation. Its function is as follows. Plays an important role in bone repair by acting as a coactivator of BMP7. This Homo sapiens (Human) protein is Bone morphogenetic protein 1 (BMP1).